Consider the following 204-residue polypeptide: Somatotropin (204 aa).

The first 17 residues, 1–17 (MDRVVLLLSVLSLGVSS), serve as a signal peptide directing secretion. Residue Gln18 is modified to Pyrrolidone carboxylic acid. Residue His36 coordinates Zn(2+). The cysteines at positions 69 and 177 are disulfide-linked. Glu186 lines the Zn(2+) pocket. A disulfide bridge links Cys194 with Cys202.

The protein belongs to the somatotropin/prolactin family.

The protein resides in the secreted. Functionally, growth hormone plays an important role in growth control and is involved in the regulation of several anabolic processes. Implicated as an osmoregulatory substance important for seawater adaptation. This is Somatotropin (gh) from Lates calcarifer (Barramundi).